The primary structure comprises 154 residues: UPF0178 protein GM21_2006 (154 aa).

The protein belongs to the UPF0178 family.

This Geobacter sp. (strain M21) protein is UPF0178 protein GM21_2006.